The sequence spans 562 residues: Phosphoglucomutase-1 (562 aa).

The residue at position 1 (methionine 1) is an N-acetylmethionine. Position 16 is an N6-acetyllysine (lysine 16). An alpha-D-glucose 1,6-bisphosphate-binding site is contributed by arginine 23. Threonine 115 carries the phosphothreonine modification. Residue serine 117 participates in alpha-D-glucose 1,6-bisphosphate binding. The active-site Phosphoserine intermediate is serine 117. Serine 117 is a binding site for Mg(2+). Phosphoserine occurs at positions 117 and 134. Threonine 185 is modified (phosphothreonine). Phosphoserine is present on residues serine 206 and serine 213. Aspartate 288, aspartate 290, and aspartate 292 together coordinate Mg(2+). Aspartate 292 and arginine 293 together coordinate alpha-D-glucose 1,6-bisphosphate. N6-acetyllysine is present on lysine 349. Tyrosine 353 carries the post-translational modification Phosphotyrosine. Threonine 357 provides a ligand contact to alpha-D-glucose 1,6-bisphosphate. The residue at position 369 (serine 369) is a Phosphoserine. 3 residues coordinate alpha-D-glucose 1,6-bisphosphate: glutamate 376, serine 378, and lysine 389. Serine 378 is modified (phosphoserine). Lysine 419 bears the N6-succinyllysine mark. Phosphothreonine; by PAK1 is present on threonine 467. Phosphoserine occurs at positions 477, 485, and 505. At threonine 507 the chain carries Phosphothreonine. Serine 509 and serine 541 each carry phosphoserine.

This sequence belongs to the phosphohexose mutase family. Monomer. Mg(2+) is required as a cofactor. In terms of processing, phosphorylation at Thr-467 by PAK1 significantly enhances enzymatic activity.

Its subcellular location is the cytoplasm. The catalysed reaction is alpha-D-glucose 1-phosphate = alpha-D-glucose 6-phosphate. The enzyme catalyses O-phospho-L-seryl-[protein] + alpha-D-glucose 1-phosphate = alpha-D-glucose 1,6-bisphosphate + L-seryl-[protein]. It catalyses the reaction alpha-D-glucose 1,6-bisphosphate + L-seryl-[protein] = O-phospho-L-seryl-[protein] + alpha-D-glucose 6-phosphate. In terms of biological role, catalyzes the reversible isomerization of alpha-D-glucose 1-phosphate to alpha-D-glucose 6-phosphate. The mechanism proceeds via the intermediate compound alpha-D-glucose 1,6-bisphosphate. This enzyme participates in both the breakdown and synthesis of glucose. This Macaca fascicularis (Crab-eating macaque) protein is Phosphoglucomutase-1 (PGM1).